A 243-amino-acid chain; its full sequence is MTYSLRIADIPVSERPRERLISVGAKNLSNAELLAILLATGQGKGKLSAVGLGQHILNELSKYRRDPLDVLRDIHPQELTAIHGIGPAKATTILAAIELGKRAFQRRPTEKMVIDSPDTAAAILGHELMYQSQERFAVILLDVKNQLIALKVITIGTATETLVHPREIFREVVKQSATKLIIAHNHPTGSLVPSQDDILLTEQLLQGATYLAIPLLDHLILGNGNFQSLRQITDLWEKYPQED.

An MPN domain is found at 113 to 235 (VIDSPDTAAA…FQSLRQITDL (123 aa)). Positions 184, 186, and 197 each coordinate Zn(2+). Positions 184 to 197 (HNHPTGSLVPSQDD) match the JAMM motif motif.

It belongs to the UPF0758 family.

In Microcystis aeruginosa (strain NIES-843 / IAM M-2473), this protein is UPF0758 protein MAE_44350.